A 97-amino-acid polypeptide reads, in one-letter code: Acylphosphatase (97 aa).

One can recognise an Acylphosphatase-like domain in the interval 9-97 (RKHIVVTGLV…ETARAFGVRQ (89 aa)). Catalysis depends on residues R24 and N42.

It belongs to the acylphosphatase family.

The enzyme catalyses an acyl phosphate + H2O = a carboxylate + phosphate + H(+). In Bifidobacterium longum (strain NCC 2705), this protein is Acylphosphatase (acyP).